A 74-amino-acid polypeptide reads, in one-letter code: Exodeoxyribonuclease 7 small subunit (74 aa).

It belongs to the XseB family. In terms of assembly, heterooligomer composed of large and small subunits.

Its subcellular location is the cytoplasm. It carries out the reaction Exonucleolytic cleavage in either 5'- to 3'- or 3'- to 5'-direction to yield nucleoside 5'-phosphates.. Its function is as follows. Bidirectionally degrades single-stranded DNA into large acid-insoluble oligonucleotides, which are then degraded further into small acid-soluble oligonucleotides. In Bdellovibrio bacteriovorus (strain ATCC 15356 / DSM 50701 / NCIMB 9529 / HD100), this protein is Exodeoxyribonuclease 7 small subunit.